Here is a 677-residue protein sequence, read N- to C-terminus: Methionine--tRNA ligase (677 aa).

The 'HIGH' region motif lies at 15 to 25 (PYANGSIHLGH). The Zn(2+) site is built by Cys146, Cys149, Cys159, and Cys162. A 'KMSKS' region motif is present at residues 333–337 (KMSKS). Lys336 is an ATP binding site. Residues 575 to 677 (DFAKIDLRVA…DGAKPGQQVK (103 aa)) form the tRNA-binding domain.

The protein belongs to the class-I aminoacyl-tRNA synthetase family. MetG type 1 subfamily. As to quaternary structure, homodimer. It depends on Zn(2+) as a cofactor.

The protein localises to the cytoplasm. The catalysed reaction is tRNA(Met) + L-methionine + ATP = L-methionyl-tRNA(Met) + AMP + diphosphate. In terms of biological role, is required not only for elongation of protein synthesis but also for the initiation of all mRNA translation through initiator tRNA(fMet) aminoacylation. This chain is Methionine--tRNA ligase, found in Salmonella paratyphi B (strain ATCC BAA-1250 / SPB7).